The sequence spans 635 residues: MAGUK p55 subfamily member 4 (635 aa).

Residues 1-16 are compositionally biased toward basic and acidic residues; it reads MRQSDRGAELTNEDRA. Residues 1 to 23 form a disordered region; that stretch reads MRQSDRGAELTNEDRALPTPPDP. L27 domains lie at 23–79 and 86–136; these read PENG…EKKL and AQIL…FEPL. Residues 153–234 form the PDZ domain; that stretch reads IVCLVKNQQP…TIMFKVIPVS (82 aa). The SH3 domain occupies 241-311; that stretch reads QKMVYVRAMI…PSNHLLKRKQ (71 aa). The region spanning 426–615 is the Guanylate kinase-like domain; the sequence is HRLIVLVGPS…ACGQLLSAIQ (190 aa). A coiled-coil region spans residues 567-622; that stretch reads VDMKFKDEDLQEMEELAQKMESQFGQFFDHVIVNDNLQDACGQLLSAIQKAQEELQ.

Belongs to the MAGUK family. As to quaternary structure, may interact with GRIA2. Interacts with MPDZ. Forms a complex with CRB1 and PALS1. Interacts with FASLG. In terms of tissue distribution, detected in the retina (at protein level). Highly enriched in the retina where it is mainly expressed by rod photoreceptors; detected in the inner segment of the photoreceptor layer and in the outer nuclear layer. Also detected at much lower levels in pineal gland, cerebellum, cortex, hippocampus, olfactory bulb, heart, liver and spleen. Expressed in the CA1-CA3 regions of pyramidal cell layers and in the granule cell layer of dentate gyrus in the hippocampus. In the cerebellum, expressed in Purkinje cells and throughout the granule cell layer. In the olfactory bulb, expressed in mitral cells.

The protein localises to the cytoplasm. May play a role in retinal photoreceptors development. The protein is MAGUK p55 subfamily member 4 (Mpp4) of Mus musculus (Mouse).